Consider the following 557-residue polypeptide: Urocanate hydratase (557 aa).

NAD(+) contacts are provided by residues 53–54 (GG), Gln-131, 177–179 (GMG), Asp-197, Arg-202, 243–244 (NA), 264–268 (QTSAH), 274–275 (YL), and Tyr-323. Cys-411 is a catalytic residue. Gly-493 provides a ligand contact to NAD(+).

This sequence belongs to the urocanase family. NAD(+) is required as a cofactor.

Its subcellular location is the cytoplasm. It catalyses the reaction 4-imidazolone-5-propanoate = trans-urocanate + H2O. It functions in the pathway amino-acid degradation; L-histidine degradation into L-glutamate; N-formimidoyl-L-glutamate from L-histidine: step 2/3. Functionally, catalyzes the conversion of urocanate to 4-imidazolone-5-propionate. The polypeptide is Urocanate hydratase (Hahella chejuensis (strain KCTC 2396)).